The following is a 905-amino-acid chain: Coatomer subunit beta' (905 aa).

8 WD repeats span residues 13–52 (ARSD…LVKT), 55–94 (VCDL…RVHM), 97–136 (AHSD…SCSQ), 140–180 (GHTH…PNFT), 183–224 (GHEK…CVQT), 227–266 (GHAQ…LEST), 350–388 (SCEI…NKSF), and 390–425 (SAQE…KSFK). Lys-627 carries the N6-acetyllysine modification. The WD 9 repeat unit spans residues 746-783 (IRTGRLPEAAFLARTYLPSQVSRVVKLWRENLSKVNQK). Residues 837–873 (EEAKGFQPSRPTAQQEPDGKPASSPVIMASQTTHKEE) form a disordered region. At Ser-859 the chain carries Phosphoserine. Residues 867–891 (QTTHKEEKSLLELEVDLDNLELEDI) are a coiled coil.

It belongs to the WD repeat COPB2 family. Oligomeric complex that consists of at least the alpha, beta, beta', gamma, delta, epsilon and zeta subunits. Probably interacts with PEX11A. Interacts with SCYL1. Interacts with JAGN1.

The protein resides in the cytoplasm. Its subcellular location is the cytosol. The protein localises to the golgi apparatus membrane. It is found in the cytoplasmic vesicle. It localises to the COPI-coated vesicle membrane. The coatomer is a cytosolic protein complex that binds to dilysine motifs and reversibly associates with Golgi non-clathrin-coated vesicles, which further mediate biosynthetic protein transport from the ER, via the Golgi up to the trans Golgi network. Coatomer complex is required for budding from Golgi membranes, and is essential for the retrograde Golgi-to-ER transport of dilysine-tagged proteins. In mammals, the coatomer can only be recruited by membranes associated to ADP-ribosylation factors (ARFs), which are small GTP-binding proteins; the complex also influences the Golgi structural integrity, as well as the processing, activity, and endocytic recycling of LDL receptors. Functionally, this coatomer complex protein, essential for Golgi budding and vesicular trafficking, is a selective binding protein (RACK) for protein kinase C, epsilon type. It binds to Golgi membranes in a GTP-dependent manner. This chain is Coatomer subunit beta' (Copb2), found in Mus musculus (Mouse).